We begin with the raw amino-acid sequence, 307 residues long: Protein rep (307 aa).

Tyr-219 provides a ligand contact to DNA.

Belongs to the Gram-positive plasmids replication protein type 1 family.

The sequence is that of Protein rep (repA) from Bacillus sp.